We begin with the raw amino-acid sequence, 279 residues long: Prephenate dehydratase (279 aa).

The region spanning 2-178 (KIAYLGPRGS…NSTRFWLLGK (177 aa)) is the Prephenate dehydratase domain. Residues 194–272 (LALTLPDNLP…VNVRLLGNYS (79 aa)) enclose the ACT domain.

The catalysed reaction is prephenate + H(+) = 3-phenylpyruvate + CO2 + H2O. The protein operates within amino-acid biosynthesis; L-phenylalanine biosynthesis; phenylpyruvate from prephenate: step 1/1. The polypeptide is Prephenate dehydratase (pheA) (Lactococcus lactis subsp. cremoris (strain MG1363)).